The sequence spans 206 residues: Ribosomal RNA small subunit methyltransferase G (206 aa).

Residues Gly-73, Leu-78, 124-125 (VE), and Arg-139 contribute to the S-adenosyl-L-methionine site.

Belongs to the methyltransferase superfamily. RNA methyltransferase RsmG family.

The protein resides in the cytoplasm. The enzyme catalyses guanosine(527) in 16S rRNA + S-adenosyl-L-methionine = N(7)-methylguanosine(527) in 16S rRNA + S-adenosyl-L-homocysteine. Functionally, specifically methylates the N7 position of guanine in position 527 of 16S rRNA. This Yersinia pseudotuberculosis serotype O:3 (strain YPIII) protein is Ribosomal RNA small subunit methyltransferase G.